The following is a 536-amino-acid chain: MLRQAGTRLLKVPVCGLRPSITLKRGYAEKAAPTEVPSILEERIRGAYNQAQMMESGRVLSIGDGIARISGLSNVQAEELVEFSSGIKGMALNLEADTVGCVLFGNDRLVREGEVVKRTRHIVDVPVGEALLGRVVDALGNPIDGKGPIKTTERRRVQLKAPGILPRTSVCEPMQTGLKAIDSMVPIGRGQRELIIGDRQTGKTAIALDTILNHKRWNNSSDESKKLYCVYVAVGQKRSTVAQLVQKLEENDSLKYSIIVAATASESAPLQYLAPFSGCAMGEWFRDNGKHGLVVYDDLSKQAVAYRQMSLLLRRPPGREAYPGDVFYLHSRLLERAAKMSPKHGGGSLTALPVIETQGGDVSAYIPTNVISITDGQIFLESELFFKGIRPAINVGLSVSRVGSAAQVKAMKQVAGQIKLFLAQYREVASFAQFGSDLDAGTRATLDRGLRLTELLKQPQYSPLAVEEQVPLIYCGVKGYLDKIPVDRVVEFEHKFIPYLRSSGAEIMEAIRKEGVLSKTTEDSLKAVIKEFLSSF.

The transit peptide at 1–27 (MLRQAGTRLLKVPVCGLRPSITLKRGY) directs the protein to the mitochondrion. Position 197–204 (197–204 (GDRQTGKT)) interacts with ATP.

It belongs to the ATPase alpha/beta chains family. As to quaternary structure, F-type ATPases have 2 components, CF(1) - the catalytic core - and CF(0) - the membrane proton channel. CF(1) has five subunits: alpha(3), beta(3), gamma(1), delta(1), epsilon(1). CF(0) has three main subunits: a, b and c.

The protein localises to the mitochondrion. It localises to the mitochondrion inner membrane. In terms of biological role, mitochondrial membrane ATP synthase (F(1)F(0) ATP synthase or Complex V) produces ATP from ADP in the presence of a proton gradient across the membrane which is generated by electron transport complexes of the respiratory chain. F-type ATPases consist of two structural domains, F(1) - containing the extramembraneous catalytic core, and F(0) - containing the membrane proton channel, linked together by a central stalk and a peripheral stalk. During catalysis, ATP synthesis in the catalytic domain of F(1) is coupled via a rotary mechanism of the central stalk subunits to proton translocation. Subunits alpha and beta form the catalytic core in F(1). Rotation of the central stalk against the surrounding alpha(3)beta(3) subunits leads to hydrolysis of ATP in three separate catalytic sites on the beta subunits. Subunit alpha does not bear the catalytic high-affinity ATP-binding sites. The protein is ATP synthase subunit alpha, mitochondrial (atp1) of Schizosaccharomyces pombe (strain 972 / ATCC 24843) (Fission yeast).